Here is a 332-residue protein sequence, read N- to C-terminus: 5-dehydro-2-deoxygluconokinase (332 aa).

This sequence belongs to the carbohydrate kinase PfkB family.

The catalysed reaction is 5-dehydro-2-deoxy-D-gluconate + ATP = 6-phospho-5-dehydro-2-deoxy-D-gluconate + ADP + H(+). The protein operates within polyol metabolism; myo-inositol degradation into acetyl-CoA; acetyl-CoA from myo-inositol: step 5/7. Functionally, catalyzes the phosphorylation of 5-dehydro-2-deoxy-D-gluconate (2-deoxy-5-keto-D-gluconate or DKG) to 6-phospho-5-dehydro-2-deoxy-D-gluconate (DKGP). In Bacillus thuringiensis subsp. konkukian (strain 97-27), this protein is 5-dehydro-2-deoxygluconokinase.